The sequence spans 93 residues: MSNVCIIAWVYGRVQGVGFHYTTQHEAQRLGLTGYAKNMDDGSVEVVACGDAAQVEKLIKWLKEGGPRSARVDKILTEPHSPRETLTGFSIRY.

Cysteines 5 and 49 form a disulfide. The Acylphosphatase-like domain occupies 5–93 (CIIAWVYGRV…ETLTGFSIRY (89 aa)). Asparagine 38 is a catalytic residue.

Belongs to the acylphosphatase family.

The catalysed reaction is an acyl phosphate + H2O = a carboxylate + phosphate + H(+). This is Acylphosphatase from Salmonella paratyphi A (strain ATCC 9150 / SARB42).